The following is an 858-amino-acid chain: Chitin synthase 2 (858 aa).

Residues 1-12 (MYPEGPKPEHDQ) are compositionally biased toward basic and acidic residues. Residues 1–116 (MYPEGPKPEH…GQAPRRQPRR (116 aa)) are disordered. The segment covering 15–24 (LQDTQFSNQP) has biased composition (polar residues). Pro residues-rich tracts occupy residues 52–68 (AYPP…PNFP) and 76–89 (PYPP…PVSP). The next 7 membrane-spanning stretches (helical) occupy residues 500–517 (RWLN…YHWR), 540–560 (TYNL…FFIL), 586–606 (LHTV…IMAL), 621–641 (MVFF…ITVV), 665–685 (NIII…FMFL), 799–819 (VLAW…TTVI), and 825–845 (ASIY…IRFT).

Belongs to the chitin synthase family.

It is found in the cell membrane. It carries out the reaction [(1-&gt;4)-N-acetyl-beta-D-glucosaminyl](n) + UDP-N-acetyl-alpha-D-glucosamine = [(1-&gt;4)-N-acetyl-beta-D-glucosaminyl](n+1) + UDP + H(+). Polymerizes chitin, a structural polymer of the cell wall and septum, by transferring the sugar moiety of UDP-GlcNAc to the non-reducing end of the growing chitin polymer. This Rhizopus oligosporus (Rhizopus microsporus var. oligosporus) protein is Chitin synthase 2 (CHS2).